Reading from the N-terminus, the 267-residue chain is MGTPILDAFNVRVEGSGDKYLVFAHGFGTDQSAWQRVLPYFTRSYKVILYDLVCAGSVNPDHFDFRRYTTLDAYVDDLLNILDSLHVTRCAYVGHSISAMTGMLASIRRPELFSKLILIGASPRFLNDGENYHGGFEQGEIEHVFSAMEANYEAWVNGFAPLAVGADVPTAVREFSRTLFNMRPDISLFVSRTVFNSDLRGILGLVNVPCCIMQTARDMSVPASVATYMKEHIGGKSTVQWLDTEGHLPHLSAPSYLAHQLEIALSQ.

Ser-96 serves as the catalytic Nucleophile. Active-site residues include Asp-218 and His-247.

This sequence belongs to the AB hydrolase superfamily.

The protein localises to the cytoplasm. The protein resides in the nucleus. Involved in strigolactone signaling pathway. Functions downstream of strigolactone synthesis, as a component of hormone signaling and as an enzyme that participates in the conversion of strigolactones to the bioactive form. Binds and hydrolyzes the synthetic strigolactone analog GR24 and its enantiomers in vitro. Forms a stable covalent complex with the D-ring of strigolactone, which is essential for hormone bioactivity. The D-ring is attached to His-247 of the catalytic triad. The hydrolysis of strigolactone into a covalently linked intermediate molecule is required to trigger strigolactone signaling. This mechanism defines RMS3 as a non-canonical hormone receptor with dual functions to generate and sense the active form of strigolactone. Strigolactones are hormones that inhibit tillering and shoot branching through the MAX-dependent pathway, contribute to the regulation of shoot architectural response to phosphate-limiting conditions and function as rhizosphere signal that stimulates hyphal branching of arbuscular mycorrhizal fungi and trigger seed germination of root parasitic weeds. In Pisum sativum (Garden pea), this protein is Strigolactone esterase RMS3.